The following is a 146-amino-acid chain: Holo-[acyl-carrier-protein] synthase (146 aa).

Asp9 and Glu63 together coordinate Mg(2+).

The protein belongs to the P-Pant transferase superfamily. AcpS family. The cofactor is Mg(2+).

It is found in the cytoplasm. The catalysed reaction is apo-[ACP] + CoA = holo-[ACP] + adenosine 3',5'-bisphosphate + H(+). Functionally, transfers the 4'-phosphopantetheine moiety from coenzyme A to a Ser of acyl-carrier-protein. This chain is Holo-[acyl-carrier-protein] synthase, found in Burkholderia ambifaria (strain MC40-6).